The primary structure comprises 364 residues: UDP-N-acetylenolpyruvoylglucosamine reductase (364 aa).

Residues 30 to 196 (LGGPATRLIT…LRVRFELEDA (167 aa)) form the FAD-binding PCMH-type domain. Residue Arg173 is part of the active site. The active-site Proton donor is Ser252. The active site involves Glu356.

This sequence belongs to the MurB family. Requires FAD as cofactor.

It is found in the cytoplasm. The enzyme catalyses UDP-N-acetyl-alpha-D-muramate + NADP(+) = UDP-N-acetyl-3-O-(1-carboxyvinyl)-alpha-D-glucosamine + NADPH + H(+). It participates in cell wall biogenesis; peptidoglycan biosynthesis. Cell wall formation. The chain is UDP-N-acetylenolpyruvoylglucosamine reductase from Streptomyces avermitilis (strain ATCC 31267 / DSM 46492 / JCM 5070 / NBRC 14893 / NCIMB 12804 / NRRL 8165 / MA-4680).